Reading from the N-terminus, the 226-residue chain is Putative O-methyltransferase Mvan_4497 (226 aa).

S-adenosyl-L-methionine contacts are provided by residues Val-53, Glu-75, 77 to 78 (GT), Ser-83, Asp-101, and Val-102. Asp-149 contacts substrate.

The protein belongs to the class I-like SAM-binding methyltransferase superfamily. Cation-dependent O-methyltransferase family.

This chain is Putative O-methyltransferase Mvan_4497, found in Mycolicibacterium vanbaalenii (strain DSM 7251 / JCM 13017 / BCRC 16820 / KCTC 9966 / NRRL B-24157 / PYR-1) (Mycobacterium vanbaalenii).